We begin with the raw amino-acid sequence, 1071 residues long: Methionine S-methyltransferase (1071 aa).

Position 2 is an N-acetylalanine (A2).

It belongs to the class I-like SAM-binding methyltransferase superfamily. As to quaternary structure, homotetramer. As to expression, expressed in roots, rosette leaves and cauline leaves. Expressed at a lower level in developing seeds.

It localises to the cytoplasm. The catalysed reaction is L-methionine + S-adenosyl-L-methionine = S-methyl-L-methionine + S-adenosyl-L-homocysteine. Its function is as follows. Catalyzes the S-methylmethionine (SMM) biosynthesis from adenosyl-L-homocysteine (AdoMet) and methionine. SMM biosynthesis (by MMT1) and degradation (by HMT-1, HMT-2 and HMT-3) constitute the SMM cycle in plants, which is probably required to achieve short term control of AdoMet level. Also able to catalyze the selenium-methylmethionine (SeMM) from AdoMet and selenium-methionine (SeMet). May play a role in phoem sulfur transport; such function is however not essential. The sequence is that of Methionine S-methyltransferase (MMT1) from Arabidopsis thaliana (Mouse-ear cress).